A 231-amino-acid polypeptide reads, in one-letter code: uncharacterized protein (231 aa).

This sequence belongs to the DnaA family. HdA subfamily.

This is an uncharacterized protein from Haemophilus influenzae (strain ATCC 51907 / DSM 11121 / KW20 / Rd).